Here is a 506-residue protein sequence, read N- to C-terminus: MSFPVEVLAGIAIELQRGIGHQDRFQRLITTLRQVLACDASALLRYESRQFIPLAIDGLAQDVLGRRFTLEGHPRLEAIARAGDVVRFPADSDLPDPYDGLIPGQESLKVHACVGLPLFAGQNLIGALTLDAMTPEQFEVFSDEELRLVAALAAGALSNALLIEQLESQNMLPGSSGVFEPIKETHMIGLSPAMTQLKKEIEIVAGSDLNVLIGGETGTGKELVAKAIHQGSPRAVNPLVYLNCAALPESVAESELFGHVKGAFTGAISNRSGKFEMADNGTLFLDEIGELSLALQAKLLRVLQYGDIQRVGDDRSLRVDVRVLAATNRDLREEVLAGRFRADLFHRLSVFPLFVPPLRERGDDVVLLAGYFCEQCRLRLGLSRVVLSPGARRHLLNYGWPGNVRELEHAIHRAVVLARATRAGDEVVLEEQHFALSEDVLPAPSAESFLALPACRNLRESTENFQREMIRQALAQNNHNWAASARALETDVANLHRLAKRLGLKD.

Asp-57 bears the 4-aspartylphosphate mark. The Sigma-54 factor interaction domain occupies 187-416; that stretch reads MIGLSPAMTQ…LEHAIHRAVV (230 aa). ATP is bound by residues 215 to 222 and 278 to 287; these read GETGTGKE and ADNGTLFLDE. Residues 481 to 500 constitute a DNA-binding region (H-T-H motif); that stretch reads WAASARALETDVANLHRLAK.

Its pathway is nitrogen metabolism; nitric oxide reduction. Its function is as follows. Required for the expression of anaerobic nitric oxide (NO) reductase, acts as a transcriptional activator for at least the norVW operon. Activation also requires sigma-54. This is Anaerobic nitric oxide reductase transcription regulator NorR from Salmonella paratyphi A (strain ATCC 9150 / SARB42).